A 114-amino-acid polypeptide reads, in one-letter code: Histone H2B (114 aa).

Residues 1-22 (MAKTPSKKAAKAPKKAGSKRNK) are disordered. At Lys3 the chain carries N6-acetyllysine. A Glycyl lysine isopeptide (Lys-Gly) (interchain with G-Cter in ubiquitin) cross-link involves residue Lys110.

Belongs to the histone H2B family. As to quaternary structure, the nucleosome is a histone octamer containing two molecules each of H2A, H2B, H3 and H4 assembled in one H3-H4 heterotetramer and two H2A-H2B heterodimers. The octamer wraps approximately 147 bp of DNA. Monoubiquitination of Lys-110 gives a specific tag for epigenetic transcriptional activation and is also prerequisite for histone H3 'Lys-4' and 'Lys-79' methylation.

It localises to the nucleus. The protein localises to the chromosome. Functionally, core component of nucleosome. Nucleosomes wrap and compact DNA into chromatin, limiting DNA accessibility to the cellular machineries which require DNA as a template. Histones thereby play a central role in transcription regulation, DNA repair, DNA replication and chromosomal stability. DNA accessibility is regulated via a complex set of post-translational modifications of histones, also called histone code, and nucleosome remodeling. The sequence is that of Histone H2B from Olisthodiscus luteus (Marine phytoflagellate).